Reading from the N-terminus, the 501-residue chain is Glutamate--tRNA ligase (501 aa).

A 'HIGH' region motif is present at residues 10–20 (PSPTGSLHIGG). The 'KMSKS' region signature appears at 251–255 (KLSKR). K254 contacts ATP.

The protein belongs to the class-I aminoacyl-tRNA synthetase family. Glutamate--tRNA ligase type 1 subfamily. As to quaternary structure, monomer.

The protein localises to the cytoplasm. The enzyme catalyses tRNA(Glu) + L-glutamate + ATP = L-glutamyl-tRNA(Glu) + AMP + diphosphate. In terms of biological role, catalyzes the attachment of glutamate to tRNA(Glu) in a two-step reaction: glutamate is first activated by ATP to form Glu-AMP and then transferred to the acceptor end of tRNA(Glu). In Desulforudis audaxviator (strain MP104C), this protein is Glutamate--tRNA ligase.